The chain runs to 1322 residues: Phosphoribosylformylglycinamidine synthase (1322 aa).

Residues 307 to 318 and Ala678 each bind ATP; that span reads GASTGSGGEIRD. Positions 718, 722, and 886 each coordinate Mg(2+). Positions 1069-1322 constitute a Glutamine amidotransferase type-1 domain; sequence MAILREQGVN…MFRNARVNLG (254 aa). The active-site Nucleophile is the Cys1162. Catalysis depends on residues His1287 and Glu1289.

The protein in the N-terminal section; belongs to the FGAMS family. Monomer.

It is found in the cytoplasm. It catalyses the reaction N(2)-formyl-N(1)-(5-phospho-beta-D-ribosyl)glycinamide + L-glutamine + ATP + H2O = 2-formamido-N(1)-(5-O-phospho-beta-D-ribosyl)acetamidine + L-glutamate + ADP + phosphate + H(+). It participates in purine metabolism; IMP biosynthesis via de novo pathway; 5-amino-1-(5-phospho-D-ribosyl)imidazole from N(2)-formyl-N(1)-(5-phospho-D-ribosyl)glycinamide: step 1/2. Functionally, phosphoribosylformylglycinamidine synthase involved in the purines biosynthetic pathway. Catalyzes the ATP-dependent conversion of formylglycinamide ribonucleotide (FGAR) and glutamine to yield formylglycinamidine ribonucleotide (FGAM) and glutamate. This Photobacterium profundum (strain SS9) protein is Phosphoribosylformylglycinamidine synthase.